An 88-amino-acid polypeptide reads, in one-letter code: Cell division topological specificity factor (88 aa).

The protein belongs to the MinE family.

In terms of biological role, prevents the cell division inhibition by proteins MinC and MinD at internal division sites while permitting inhibition at polar sites. This ensures cell division at the proper site by restricting the formation of a division septum at the midpoint of the long axis of the cell. The chain is Cell division topological specificity factor from Salmonella agona (strain SL483).